Reading from the N-terminus, the 482-residue chain is tRNA modification GTPase MnmE (482 aa).

(6S)-5-formyl-5,6,7,8-tetrahydrofolate-binding residues include R25, E82, and K135. A TrmE-type G domain is found at 231–404 (GIKVVIAGQP…LRRVLLDIAG (174 aa)). Residue N241 coordinates K(+). GTP is bound by residues 241 to 246 (NAGKSS), 260 to 266 (TPIAGTT), 285 to 288 (DTAG), and 385 to 387 (SAR). S245 provides a ligand contact to Mg(2+). Residues T260, I262, and T265 each contribute to the K(+) site. T266 provides a ligand contact to Mg(2+). K482 provides a ligand contact to (6S)-5-formyl-5,6,7,8-tetrahydrofolate.

This sequence belongs to the TRAFAC class TrmE-Era-EngA-EngB-Septin-like GTPase superfamily. TrmE GTPase family. Homodimer. Heterotetramer of two MnmE and two MnmG subunits. K(+) serves as cofactor.

It is found in the cytoplasm. Functionally, exhibits a very high intrinsic GTPase hydrolysis rate. Involved in the addition of a carboxymethylaminomethyl (cmnm) group at the wobble position (U34) of certain tRNAs, forming tRNA-cmnm(5)s(2)U34. In Paracidovorax citrulli (strain AAC00-1) (Acidovorax citrulli), this protein is tRNA modification GTPase MnmE.